The following is a 516-amino-acid chain: Lipid II flippase MurJ (516 aa).

Helical transmembrane passes span tryptophan 93–valine 113, isoleucine 133–threonine 153, leucine 159–alanine 179, alanine 188–leucine 208, valine 233–isoleucine 253, leucine 275–leucine 295, valine 317–threonine 337, leucine 358–phenylalanine 378, isoleucine 390–isoleucine 409, phenylalanine 448–isoleucine 468, and isoleucine 483–valine 503.

Belongs to the MurJ/MviN family.

It is found in the cell inner membrane. It participates in cell wall biogenesis; peptidoglycan biosynthesis. In terms of biological role, involved in peptidoglycan biosynthesis. Transports lipid-linked peptidoglycan precursors from the inner to the outer leaflet of the cytoplasmic membrane. This chain is Lipid II flippase MurJ, found in Burkholderia cenocepacia (strain ATCC BAA-245 / DSM 16553 / LMG 16656 / NCTC 13227 / J2315 / CF5610) (Burkholderia cepacia (strain J2315)).